We begin with the raw amino-acid sequence, 786 residues long: Receptor-like protein 30 (786 aa).

A signal peptide spans 1–30 (MIPSQSNSFSGSVITLYFFLLGSLVLRTLA). Residues 31 to 739 (SSRLHYCRHD…SEPEEQVINW (709 aa)) are Extracellular-facing. N67, N98, N115, and N133 each carry an N-linked (GlcNAc...) asparagine glycan. LRR repeat units lie at residues 110–133 (LQQLQNLTLSDCHLYGEVTSSLGN), 134–158 (LSRLTHLDLSSNQLTGEVLASVSKL), 159–181 (NQLRDLLLSENSFSGNIPTSFTN), and 183–204 (TKLSSLDISSNQFTLENFSFIL). 3 N-linked (GlcNAc...) asparagine glycosylation sites follow: N181, N199, and N206. 14 LRR repeats span residues 207–231 (LTSLSSLNVASNHFKSTLPSDMSGL), 233–255 (NLKYFDVRENSFVGTFPTSLFTI), 257–279 (SLQIVYLEGNQFMGPIKFGNISS), 280–304 (SSRLWDLNLADNKFDGPIPEYISEI), 305–328 (HSLIVLDLSHNNLVGPIPTSISKL), 329–352 (VNLQHLSLSNNTLEGEVPGCLWGL), 354–375 (TVTLSHNSFNSFGKSSSGALDG), 376–399 (ESMQELDLGSNSLGGPFPHWICKQ), 400–423 (RFLKYLDLSNNLFNGSIPPCLKNS), 425–447 (YWLKGLVLRNNSFSGFLPDVFVN), 448–472 (ASMLLSLDVSYNRLEGKLPKSLINC), 474–496 (GMELLNVGSNIIKDTFPSWLVSL), 497–524 (PSLRVLILRSNAFYGSLYYDHISFGFQH), and 526–546 (RLIDISQNGFSGTLSPLYFSN). N276 carries an N-linked (GlcNAc...) asparagine glycan. N338 is a glycosylation site (N-linked (GlcNAc...) asparagine). Residues N413, N422, N434, N447, and N471 are each glycosylated (N-linked (GlcNAc...) asparagine). N558 is a glycosylation site (N-linked (GlcNAc...) asparagine). 4 LRR repeats span residues 596–621 (IPYFFRAIDFSGNRFFGNIPESVGLL), 622–645 (KELRLLNLSGNSFTSNIPQSLANL), 646–669 (TNLETLDLSRNQLSGHIPRDLGSL), and 671–694 (FLSTMNFSHNLLEGPVPLGTQFQS). Residues N628 and N644 are each glycosylated (N-linked (GlcNAc...) asparagine). The N-linked (GlcNAc...) asparagine glycan is linked to N676. The helical transmembrane segment at 740–760 (IAAAIAYGPGVFCGLVIGHIF) threads the bilayer. Topologically, residues 761–786 (FTAHKHEWFMEKFHRNKRRVVTTSAR) are cytoplasmic.

This sequence belongs to the RLP family.

The protein localises to the cell membrane. In terms of biological role, receptor for microbe-associated molecular patterns (MAMPs) that induces a BAK1-dependent basal immune response to necrotrophic fungi (e.g. S.sclerotiorum) in the presence of MAMPs (e.g. flg22 and SCLEROTINIA CULTURE FILTRATE ELICITOR1 (SCFE1) from the necrotrophic fungal pathogen S.sclerotiorum). Functionality seems to depend on the presence of the receptor kinase SOBIR1 as an adapter protein. Required for full non-host resistance to bacterial pathogens (e.g. P.syringae pv phaseolicola). The polypeptide is Receptor-like protein 30 (Arabidopsis thaliana (Mouse-ear cress)).